A 350-amino-acid polypeptide reads, in one-letter code: WUSCHEL-related homeobox 1 (350 aa).

Residues 72 to 136 (MVSSRWNPTP…NHKARERQKR (65 aa)) constitute a DNA-binding region (homeobox; WUS-type). Positions 283–308 (TNTETCHRNGDDNKDQEQHEDCSNGE) are disordered.

The protein belongs to the WUS homeobox family.

It localises to the nucleus. Functionally, transcription factor which may be involved in developmental processes. The chain is WUSCHEL-related homeobox 1 (WOX1) from Arabidopsis thaliana (Mouse-ear cress).